The following is a 328-amino-acid chain: Glycerol-3-phosphate dehydrogenase [NAD(P)+] (328 aa).

3 residues coordinate NADPH: Trp-11, Arg-30, and Lys-103. 3 residues coordinate sn-glycerol 3-phosphate: Lys-103, Gly-132, and Ser-134. Ala-136 contacts NADPH. Residues Lys-187, Asp-240, Ser-250, Arg-251, and Asn-252 each contribute to the sn-glycerol 3-phosphate site. The active-site Proton acceptor is the Lys-187. Arg-251 contacts NADPH. Residues Val-275 and Glu-277 each contribute to the NADPH site.

It belongs to the NAD-dependent glycerol-3-phosphate dehydrogenase family.

The protein localises to the cytoplasm. The enzyme catalyses sn-glycerol 3-phosphate + NAD(+) = dihydroxyacetone phosphate + NADH + H(+). The catalysed reaction is sn-glycerol 3-phosphate + NADP(+) = dihydroxyacetone phosphate + NADPH + H(+). Its pathway is membrane lipid metabolism; glycerophospholipid metabolism. Catalyzes the reduction of the glycolytic intermediate dihydroxyacetone phosphate (DHAP) to sn-glycerol 3-phosphate (G3P), the key precursor for phospholipid synthesis. In Thiobacillus denitrificans (strain ATCC 25259 / T1), this protein is Glycerol-3-phosphate dehydrogenase [NAD(P)+].